We begin with the raw amino-acid sequence, 231 residues long: Large ribosomal subunit protein uL1 (231 aa).

This sequence belongs to the universal ribosomal protein uL1 family. As to quaternary structure, part of the 50S ribosomal subunit.

Binds directly to 23S rRNA. The L1 stalk is quite mobile in the ribosome, and is involved in E site tRNA release. Functionally, protein L1 is also a translational repressor protein, it controls the translation of the L11 operon by binding to its mRNA. This is Large ribosomal subunit protein uL1 from Polaromonas sp. (strain JS666 / ATCC BAA-500).